A 287-amino-acid chain; its full sequence is Acetylglutamate kinase (287 aa).

Substrate is bound by residues 70–71 (GG), Arg92, and Asn184.

It belongs to the acetylglutamate kinase family. ArgB subfamily.

The protein localises to the cytoplasm. The enzyme catalyses N-acetyl-L-glutamate + ATP = N-acetyl-L-glutamyl 5-phosphate + ADP. Its pathway is amino-acid biosynthesis; L-arginine biosynthesis; N(2)-acetyl-L-ornithine from L-glutamate: step 2/4. In terms of biological role, catalyzes the ATP-dependent phosphorylation of N-acetyl-L-glutamate. The polypeptide is Acetylglutamate kinase (Roseobacter denitrificans (strain ATCC 33942 / OCh 114) (Erythrobacter sp. (strain OCh 114))).